The following is a 263-amino-acid chain: Interleukin-33 (263 aa).

Residues 1-17 (MKYSTTKIPPAKMNSSA) are compositionally biased toward polar residues. A disordered region spans residues 1 to 28 (MKYSTTKIPPAKMNSSADKALVKSPKLR). Residues 1–65 (MKYSTTKIPP…CYFRKEITKR (65 aa)) are homeodomain-like HTH domain. Residues 62–103 (ITKRYSPRTAEKCRKQCLVFTACHQQLNKDFTSDVPMLQKCF) are interaction with RELA.

It belongs to the IL-1 family. Highly divergent. As to quaternary structure, forms a 1:1:1 heterotrimeric complex with its primary high-affinity receptor IL1RL1 and the coreceptor IL1RAP. Interacts with cargo receptor TMED10; the interaction mediates the translocation from the cytoplasm into the ERGIC (endoplasmic reticulum-Golgi intermediate compartment) and thereby secretion. Post-translationally, the full-length protein can be released from cells and is able to signal via the IL1RL1/ST2 receptor. However, proteolytic processing by CELA1, CSTG/cathepsin G and ELANE/neutrophil elastase produces C-terminal peptides that are more active than the unprocessed full-length protein. May also be proteolytically processed by calpains. Proteolytic cleavage mediated by apoptotic caspases including CASP3 and CASP7 results in IL33 inactivation. In vitro proteolytic cleavage by CASP1 was reported but could not be confirmed in vivo suggesting that IL33 is probably not a direct substrate for that caspase. In terms of tissue distribution, expressed in cultured umbilical artery smooth muscle cells after stimulation with IL1A and IL1B, and to a lesser extent with IFNG. Expressed in vasospastic cerebral arteries after subarachnoid hemorrhage.

The protein resides in the nucleus. Its subcellular location is the chromosome. The protein localises to the cytoplasm. It is found in the cytoplasmic vesicle. It localises to the secretory vesicle. The protein resides in the secreted. In terms of biological role, cytokine that binds to and signals through the IL1RL1/ST2 receptor which in turn activates NF-kappa-B and MAPK signaling pathways in target cells. Involved in the maturation of Th2 cells inducing the secretion of T-helper type 2-associated cytokines. Also involved in activation of mast cells, basophils, eosinophils and natural killer cells. Acts as a chemoattractant for Th2 cells, and may function as an 'alarmin', that amplifies immune responses during tissue injury. Induces rapid UCP2-dependent mitochondrial rewiring that attenuates the generation of reactive oxygen species and preserves the integrity of Krebs cycle required for persistent production of itaconate and subsequent GATA3-dependent differentiation of inflammation-resolving alternatively activated macrophages. Its function is as follows. In quiescent endothelia the uncleaved form is constitutively and abundantly expressed, and acts as a chromatin-associated nuclear factor with transcriptional repressor properties, it may sequester nuclear NF-kappaB/RELA, lowering expression of its targets. This form is rapidely lost upon angiogenic or pro-inflammatory activation. The polypeptide is Interleukin-33 (IL33) (Canis lupus familiaris (Dog)).